The primary structure comprises 494 residues: Guanosine-5'-triphosphate,3'-diphosphate pyrophosphatase (494 aa).

Belongs to the GppA/Ppx family. GppA subfamily.

It carries out the reaction guanosine 3'-diphosphate 5'-triphosphate + H2O = guanosine 3',5'-bis(diphosphate) + phosphate + H(+). The protein operates within purine metabolism; ppGpp biosynthesis; ppGpp from GTP: step 2/2. Functionally, catalyzes the conversion of pppGpp to ppGpp. Guanosine pentaphosphate (pppGpp) is a cytoplasmic signaling molecule which together with ppGpp controls the 'stringent response', an adaptive process that allows bacteria to respond to amino acid starvation, resulting in the coordinated regulation of numerous cellular activities. The protein is Guanosine-5'-triphosphate,3'-diphosphate pyrophosphatase of Escherichia coli O139:H28 (strain E24377A / ETEC).